Reading from the N-terminus, the 428-residue chain is Putative aminotransferase MSMEG_6286/MSMEI_6121 (428 aa).

Glycine 37 serves as a coordination point for substrate. Pyridoxal 5'-phosphate is bound by residues tyrosine 72, 102–105, asparagine 191, 222–225, and 256–258; these read ASLE, AYAV, and STS. Lysine 339 is covalently cross-linked (Isoglutamyl lysine isopeptide (Lys-Gln) (interchain with Q-Cter in protein Pup)).

The protein belongs to the class-I pyridoxal-phosphate-dependent aminotransferase family. It depends on pyridoxal 5'-phosphate as a cofactor.

The sequence is that of Putative aminotransferase MSMEG_6286/MSMEI_6121 from Mycolicibacterium smegmatis (strain ATCC 700084 / mc(2)155) (Mycobacterium smegmatis).